The primary structure comprises 145 residues: Trafficking protein particle complex subunit 1 (145 aa).

It belongs to the TRAPP small subunits family. BET5 subfamily. Part of the multisubunit transport protein particle (TRAPP) complex. The heterodimer TRAPPC6B-TRAPPC3 interacts with TRAPPC1 likely providing a core for TRAPP complex formation.

The protein resides in the golgi apparatus. Its subcellular location is the cis-Golgi network. The protein localises to the endoplasmic reticulum. Its function is as follows. May play a role in vesicular transport from endoplasmic reticulum to Golgi. This Bos taurus (Bovine) protein is Trafficking protein particle complex subunit 1 (TRAPPC1).